Consider the following 385-residue polypeptide: Heat-inducible transcription repressor HrcA (385 aa).

The protein belongs to the HrcA family.

In terms of biological role, negative regulator of class I heat shock genes (grpE-dnaK-dnaJ and groELS operons). Prevents heat-shock induction of these operons. The polypeptide is Heat-inducible transcription repressor HrcA (Protochlamydia amoebophila (strain UWE25)).